A 414-amino-acid chain; its full sequence is MAALRYAGLDDTDSEDELPPGWEERTTKDGWVYYANHTEEKTQWEHPKTGKRKRVAGDLPYGWEQGTDENGQVFFVDHINKRTTYLDPRLAFTVDDNPTKPTTRQRYDGSTTALEILQGRDFTGKVVVVTGANSGIGFETAKSFALHGAHVILACRNMARASEAVSRILEEWHKAKVEAVTLDLALLRSVQHFAEAFKAKNVPLHVLVCNAATFALPWSLTKDGLETTFQVNHLGHFYLVQLLQDVLCRSAPARVIVVSSESHRFTDINDSLGKLDFSRLSPTKNDYWAMLAYNRSKLCNVLFSNELHRRLSPRGVTSNAVHPGNMMYSNIHRSWWVYTLLFTLARPFTKSMQQGAATTVYCAAAPELEGLGGMYFNNCCRCMPSPEAQSEETARTLWALSERLIQERLGSQSG.

A disordered region spans residues 1–24 (MAALRYAGLDDTDSEDELPPGWEE). The residue at position 12 (threonine 12) is a Phosphothreonine. Serine 14 is modified (phosphoserine). Residues 16 to 49 (DELPPGWEERTTKDGWVYYANHTEEKTQWEHPKT) enclose the WW 1 domain. Position 33 is a phosphotyrosine (tyrosine 33). A Nuclear localization signal motif is present at residues 50 to 55 (GKRKRV). The WW 2 domain maps to 57–90 (GDLPYGWEQGTDENGQVFFVDHINKRTTYLDPRL). The tract at residues 125–414 (KVVVVTGANS…IQERLGSQSG (290 aa)) is interaction with MAPT. Position 131 to 137 (131 to 137 (GANSGIG)) interacts with NADP(+). Positions 209-273 (CNAATFALPW…RFTDINDSLG (65 aa)) are mediates targeting to the mitochondria. Serine 260 is a substrate binding site. Tyrosine 287 carries the phosphotyrosine; by TNK2 modification. The active-site Proton acceptor is tyrosine 293.

It belongs to the short-chain dehydrogenases/reductases (SDR) family. As to quaternary structure, interacts with TP53, p73/TP73 and MAPK8. Interacts with MAPT/TAU, RUNX2 and HYAL2. Forms a ternary complex with TP53 and MDM2. Interacts with ERBB4, LITAF and WBP1. Interacts with DVL1, DVL2 and DVL3. May interact with FAM189B and SCOTIN. Interacts with TNK2. Interacts with TMEM207. Interacts (via WW domain) with VOPP1. Phosphorylated upon genotoxic stress. Phosphorylation of Tyr-33 regulates interaction with TP53, TP73 and MAPK8. May also regulate proapoptotic activity. Phosphorylation by TNK2 is associated with polyubiquitination and degradation. In terms of processing, ubiquitinated when phosphorylated by TNK2, leading to its degradation.

Its subcellular location is the cytoplasm. The protein localises to the nucleus. It is found in the mitochondrion. The protein resides in the golgi apparatus. It localises to the lysosome. Putative oxidoreductase. Acts as a tumor suppressor and plays a role in apoptosis. May function synergistically with p53/TP53 to control genotoxic stress-induced cell death. Plays a role in TGFB1 signaling and TGFB1-mediated cell death. May also play a role in tumor necrosis factor (TNF)-mediated cell death. Required for normal bone development. Inhibits Wnt signaling, probably by sequestering DVL2 in the cytoplasm. In Pongo abelii (Sumatran orangutan), this protein is WW domain-containing oxidoreductase (WWOX).